We begin with the raw amino-acid sequence, 346 residues long: Nuclear distribution protein nudE-like 1 (346 aa).

Residues 13-190 (KEEIVYWREL…LAVRERQTNG (178 aa)) are a coiled coil. 2 disordered regions span residues 184–205 (RERQ…DCDK) and 325–346 (YDPP…PLSV). Positions 188-200 (TNGTRKSAPSSPT) are enriched in polar residues. Positions 335-346 (PPSPPGMLPLSV) are enriched in pro residues.

Belongs to the nudE family. In terms of processing, phosphorylated in mitosis.

Its subcellular location is the cytoplasm. The protein localises to the cytoskeleton. It localises to the microtubule organizing center. The protein resides in the centrosome. It is found in the spindle. Required for organization of the cellular microtubule array and microtubule anchoring at the centrosome. Positively regulates the activity of the minus-end directed microtubule motor protein dynein. May enhance dynein-mediated microtubule sliding by targeting dynein to the microtubule plus end. Positively regulates lysosome peripheral distribution and ruffled border formation in osteoclasts. The protein is Nuclear distribution protein nudE-like 1 (ndel1) of Xenopus tropicalis (Western clawed frog).